A 262-amino-acid polypeptide reads, in one-letter code: Adenosylcobinamide-GDP ribazoletransferase (262 aa).

6 helical membrane passes run 43-63, 66-86, 120-140, 146-166, 191-211, and 242-262; these read YFGL…WLTQ, LPAG…TGGF, GAIA…ELAL, AGSA…SIIF, LFIL…LAAL, and AAQQ…GSIL.

This sequence belongs to the CobS family. Mg(2+) serves as cofactor.

The protein resides in the cell inner membrane. The catalysed reaction is alpha-ribazole + adenosylcob(III)inamide-GDP = adenosylcob(III)alamin + GMP + H(+). It carries out the reaction alpha-ribazole 5'-phosphate + adenosylcob(III)inamide-GDP = adenosylcob(III)alamin 5'-phosphate + GMP + H(+). It functions in the pathway cofactor biosynthesis; adenosylcobalamin biosynthesis; adenosylcobalamin from cob(II)yrinate a,c-diamide: step 7/7. Functionally, joins adenosylcobinamide-GDP and alpha-ribazole to generate adenosylcobalamin (Ado-cobalamin). Also synthesizes adenosylcobalamin 5'-phosphate from adenosylcobinamide-GDP and alpha-ribazole 5'-phosphate. The polypeptide is Adenosylcobinamide-GDP ribazoletransferase (Shewanella putrefaciens (strain CN-32 / ATCC BAA-453)).